A 157-amino-acid polypeptide reads, in one-letter code: Phosphopantetheine adenylyltransferase (157 aa).

Belongs to the eukaryotic CoaD family.

The protein resides in the cytoplasm. It carries out the reaction (R)-4'-phosphopantetheine + ATP + H(+) = 3'-dephospho-CoA + diphosphate. Its pathway is cofactor biosynthesis; coenzyme A biosynthesis. In terms of biological role, reversibly transfers an adenylyl group from ATP to 4'-phosphopantetheine, yielding dephospho-CoA (dPCoA) and pyrophosphate. This is Phosphopantetheine adenylyltransferase from Methanopyrus kandleri (strain AV19 / DSM 6324 / JCM 9639 / NBRC 100938).